The chain runs to 794 residues: Phenylalanine--tRNA ligase beta subunit (794 aa).

Positions 39–154 (SSSFSSIITA…ANTPLGESAC (116 aa)) constitute a tRNA-binding domain. Positions 403–481 (PPSPTLTLRT…QPWKIEKKKA (79 aa)) constitute a B5 domain. Positions 457, 463, 466, and 467 each coordinate Mg(2+). The region spanning 697-793 (PIYPSSFRDI…QLDDTKGTID (97 aa)) is the FDX-ACB domain.

Belongs to the phenylalanyl-tRNA synthetase beta subunit family. Type 1 subfamily. Tetramer of two alpha and two beta subunits. It depends on Mg(2+) as a cofactor.

Its subcellular location is the cytoplasm. The catalysed reaction is tRNA(Phe) + L-phenylalanine + ATP = L-phenylalanyl-tRNA(Phe) + AMP + diphosphate + H(+). The protein is Phenylalanine--tRNA ligase beta subunit of Chlamydia abortus (strain DSM 27085 / S26/3) (Chlamydophila abortus).